The sequence spans 261 residues: MSAKQQLRILVPVKRVVDFQIKPRVNKTLTGIETSGIKFSINPFDDIAVEEAIRIKEKNKSLVESTHAVSIGSAKAQDILRNCLAKGIDTCSLIDSVGKENIEPLAIAKILKAVVEKKGSNLVLMGKQAIDDDCNNTGQMLAGLLNWPQATNAAKVEFLDNGRVQVTREIDDGEEVIEASLPMVITTDLRLNTPRYVGLPKLMKAKKKPIEKLDIAKDFPEINIEPQLKIVSMEEPKTKSPGVKLNSVDELIEKLKEVKAI.

Position 2 is an N-acetylserine (S2).

This sequence belongs to the ETF beta-subunit/FixA family. In terms of assembly, heterodimer of an alpha and a beta subunit. Interacts with YFH1. It depends on FAD as a cofactor. Requires AMP as cofactor.

It localises to the mitochondrion matrix. The electron transfer flavoprotein serves as a specific electron acceptor for several dehydrogenases, including five acyl-CoA dehydrogenases, glutaryl-CoA and sarcosine dehydrogenase. It transfers the electrons to the main mitochondrial respiratory chain via ETF-ubiquinone oxidoreductase (ETF dehydrogenase). This chain is Probable electron transfer flavoprotein subunit beta (CIR1), found in Saccharomyces cerevisiae (strain ATCC 204508 / S288c) (Baker's yeast).